The following is a 259-amino-acid chain: Ribonuclease HII (259 aa).

Positions 70–258 (TLIVGIDEVG…VKSLVLGKKE (189 aa)) constitute an RNase H type-2 domain. A divalent metal cation-binding residues include Asp-76, Glu-77, and Asp-168.

It belongs to the RNase HII family. The cofactor is Mn(2+). Mg(2+) serves as cofactor.

Its subcellular location is the cytoplasm. It catalyses the reaction Endonucleolytic cleavage to 5'-phosphomonoester.. Its function is as follows. Endonuclease that specifically degrades the RNA of RNA-DNA hybrids. The protein is Ribonuclease HII of Streptococcus pneumoniae serotype 2 (strain D39 / NCTC 7466).